The primary structure comprises 209 residues: Abscisic acid receptor PYL3 (209 aa).

Residues 1–23 (MNLAPIHDPSSSSTTTTSSSTPY) are disordered. Positions 10–21 (SSSSTTTTSSST) are enriched in low complexity. Positions 43 to 205 (FPRSPNTCTS…NLQNLAVIST (163 aa)) are START-like. Residues Lys79, 113–118 (ASTSVE), 140–146 (RLNNYRS), and Glu170 each bind abscisate. Residues 109-113 (SGLPA) carry the Gate loop motif. The short motif at 139–141 (HRL) is the Latch loop element.

This sequence belongs to the PYR/PYL/RCAR abscisic acid intracellular receptor family. As to quaternary structure, homodimer and monomer. Binds ABA on one subunit only. ABA-binding favors monomer and trans-homodimer intermediate, and increases PP2C inhibitor activity. Binds both (-)-ABA and (+)-ABA. Binds to CARs protein in an ABA-independent manner, both at the plasma membrane and in the nucleus. Interacts with HAB1, ABI1 and ABI2, and possibly with other PP2Cs.

The protein resides in the cytoplasm. It is found in the nucleus. It localises to the cell membrane. In terms of biological role, receptor for abscisic acid (ABA) required for ABA-mediated responses such as stomatal closure and germination inhibition. Inhibits the activity of group-A protein phosphatases type 2C (PP2Cs) when activated by ABA. Can be activated by both (-)-ABA and (+)-ABA. The chain is Abscisic acid receptor PYL3 (PYL3) from Arabidopsis thaliana (Mouse-ear cress).